We begin with the raw amino-acid sequence, 294 residues long: Survival motor neuron protein (294 aa).

Residues 1-12 show a composition bias toward gly residues; that stretch reads MAMSSGGSGGGV. Residues 1–32 are disordered; sequence MAMSSGGSGGGVPEQEDSVLFRRGTGQSDDSD. Position 2 is an N-acetylalanine (Ala2). Residues Ser4, Ser5, and Ser8 each carry the phosphoserine; by PKA modification. At Thr25 the chain carries Phosphothreonine. The tract at residues 26–51 is interacts with GEMIN2; that stretch reads GQSDDSDIWDDTALIKAYDKAVASFK. Ser28 and Ser31 each carry phosphoserine. A Glycyl lysine isopeptide (Lys-Gly) (interchain with G-Cter in SUMO2) cross-link involves residue Lys51. The segment at 59-88 is disordered; it reads ICETSGKPKTTPKRKPAKKNKSQKKNTAAS. The span at 68–82 shows a compositional bias: basic residues; it reads TTPKRKPAKKNKSQK. Thr69 is modified (phosphothreonine). The residue at position 85 (Thr85) is a Phosphothreonine; by PKA. A Tudor domain is found at 91 to 151; the sequence is QWKVGDKCSA…LSPICEVANN (61 aa). Positions 97-209 are required for interaction with RPP20/POP7; the sequence is KCSAIWSEDG…MPGPRLGPGK (113 aa). The span at 156-166 shows a compositional bias: low complexity; the sequence is AQENENESQVS. The interval 156-222 is disordered; it reads AQENENESQV…KFNGPPPPPP (67 aa). At Ser187 the chain carries Phosphoserine; by PKA. Residues 194–204 are compositionally biased toward pro residues; it reads LPPPPPMPGPR. A compositionally biased stretch (low complexity) spans 206–215; the sequence is GPGKPGLKFN. Residue Lys209 forms a Glycyl lysine isopeptide (Lys-Gly) (interchain with G-Cter in SUMO2) linkage. A P2 (binding site for SNRPB) region spans residues 240–267; that stretch reads PPIIPPPPPICPDSLDDADALGSMLISW. The interval 252-280 is involved in homooligomerization; sequence DSLDDADALGSMLISWYMSGYHTGYYMGF. The segment at 279–294 is required for interaction with SYNCRIP; sequence GFRQNQKEGRCSHSLN.

It belongs to the SMN family. As to quaternary structure, homooligomer; may form higher order homooligomers in the dimer to octamer range. Part of the core SMN complex that contains SMN1, GEMIN2/SIP1, DDX20/GEMIN3, GEMIN4, GEMIN5, GEMIN6, GEMIN7, GEMIN8 and STRAP/UNRIP. Part of the SMN-Sm complex that contains SMN1, GEMIN2/SIP1, DDX20/GEMIN3, GEMIN4, GEMIN5, GEMIN6, GEMIN7, GEMIN8, STRAP/UNRIP and the Sm proteins SNRPB, SNRPD1, SNRPD2, SNRPD3, SNRPE, SNRPF and SNRPG. Component of an import snRNP complex composed of KPNB1, RNUT1, SMN1 and ZNF259. Interacts with DDX20, FBL, NOLA1, RNUT1, SYNCRIP and with several spliceosomal snRNP core Sm proteins, including SNRPB, SNRPD1, SNRPD2, SNRPD3, SNRPE and ILF3. Interacts with GEMIN2; the interaction is direct. Interacts with GEMIN3; the interaction is direct. Interacts with GEMIN8; the interaction is direct. Interacts with SNRPB; the interaction is direct. Interacts (via Tudor domain) with SNRPD1 (via C-terminus); the interaction is direct. Interacts with SNRPD2; the interaction is direct. Interacts (via Tudor domain) with SNRPD3 (via C-terminus); the interaction is direct. Interacts with SNRPE; the interaction is direct. Interacts with OSTF1, LSM10, LSM11 and RPP20/POP7. Interacts (via C-terminal region) with ZPR1 (via C-terminal region). Interacts (via Tudor domain) with COIL. Interacts with SETX; recruits SETX to POLR2A. Interacts with POLR2A (via the C-terminal domain (CTD)). Interacts with PRMT5. Interacts with XRN2. Interacts (via C-terminus) with FMR1 (via C-terminus); the interaction is direct and occurs in a RNA-independent manner. Interacts (via Tudor domain) with SF3B2 ('Arg-508'-methylated form). Interacts with WRAP53/TCAB1. Interacts (via Tudor domain) with ELAVL4 in an RNA-independent manner; the interaction is required for localization of ELAVL4 to RNA granules. Interacts with FRG1. In terms of assembly, does not homooligomerize. Does not interact with SNRPB. In terms of tissue distribution, expressed in a wide variety of tissues. Expressed at high levels in brain, kidney and liver, moderate levels in skeletal and cardiac muscle, and low levels in fibroblasts and lymphocytes. Also seen at high levels in spinal cord. Present in osteoclasts and mononuclear cells (at protein level).

The protein resides in the nucleus. It is found in the gem. Its subcellular location is the cajal body. It localises to the cytoplasm. The protein localises to the cytoplasmic granule. The protein resides in the perikaryon. It is found in the cell projection. Its subcellular location is the neuron projection. It localises to the axon. The protein localises to the myofibril. The protein resides in the sarcomere. It is found in the z line. In terms of biological role, the SMN complex catalyzes the assembly of small nuclear ribonucleoproteins (snRNPs), the building blocks of the spliceosome, and thereby plays an important role in the splicing of cellular pre-mRNAs. Most spliceosomal snRNPs contain a common set of Sm proteins SNRPB, SNRPD1, SNRPD2, SNRPD3, SNRPE, SNRPF and SNRPG that assemble in a heptameric protein ring on the Sm site of the small nuclear RNA to form the core snRNP (Sm core). In the cytosol, the Sm proteins SNRPD1, SNRPD2, SNRPE, SNRPF and SNRPG are trapped in an inactive 6S pICln-Sm complex by the chaperone CLNS1A that controls the assembly of the core snRNP. To assemble core snRNPs, the SMN complex accepts the trapped 5Sm proteins from CLNS1A forming an intermediate. Within the SMN complex, SMN1 acts as a structural backbone and together with GEMIN2 it gathers the Sm complex subunits. Binding of snRNA inside 5Sm ultimately triggers eviction of the SMN complex, thereby allowing binding of SNRPD3 and SNRPB to complete assembly of the core snRNP. Ensures the correct splicing of U12 intron-containing genes that may be important for normal motor and proprioceptive neurons development. Also required for resolving RNA-DNA hybrids created by RNA polymerase II, that form R-loop in transcription terminal regions, an important step in proper transcription termination. May also play a role in the metabolism of small nucleolar ribonucleoprotein (snoRNPs). This chain is Survival motor neuron protein (SMN1), found in Homo sapiens (Human).